We begin with the raw amino-acid sequence, 201 residues long: Peptide deformylase 2 (201 aa).

The Fe cation site is built by C121 and H163. E164 is an active-site residue. H167 lines the Fe cation pocket.

This sequence belongs to the polypeptide deformylase family. It depends on Fe(2+) as a cofactor.

It carries out the reaction N-terminal N-formyl-L-methionyl-[peptide] + H2O = N-terminal L-methionyl-[peptide] + formate. Its function is as follows. Removes the formyl group from the N-terminal Met of newly synthesized proteins. Requires at least a dipeptide for an efficient rate of reaction. N-terminal L-methionine is a prerequisite for activity but the enzyme has broad specificity at other positions. This chain is Peptide deformylase 2, found in Prochlorococcus marinus (strain MIT 9313).